Consider the following 889-residue polypeptide: Low-affinity potassium transport protein (889 aa).

Over 1-51 (MPTAKRTSSRASLALPFQLRLVHKKSWGHRLRDFISGFLKSCRPIAKYVFP) the chain is Cytoplasmic. The helical transmembrane segment at 52 to 73 (NFIVVHYIYLITLSIIGSILLY) threads the bilayer. At 74–80 (PCKNTAF) the chain is on the extracellular side. The chain crosses the membrane as a helical span at residues 81–101 (IDVLFLAAGASTQGGLATKST). Topologically, residues 102 to 109 (NDFNLYQQ) are cytoplasmic. The chain crosses the membrane as a helical span at residues 110-130 (IVVYVITLLSTPILIHGFLAF). Residues 131-464 (VRLYWFERYF…EYRALRLLCC (334 aa)) lie on the Extracellular side of the membrane. The interval 189 to 244 (REDPRQSASDVPMDSPDTSALSSISPLNVSSSKEESSDTQSSPPNFSSKRQPSDVD) is disordered. Positions 207–219 (SALSSISPLNVSS) are enriched in low complexity. N-linked (GlcNAc...) asparagine glycans are attached at residues N216, N233, and N265. Residues 465–487 (ILMVYYIGFNILAFVTIVPWACT) traverse the membrane as a helical segment. Over 488–499 (RHHYSEIIRRNG) the chain is Cytoplasmic. A helical membrane pass occupies residues 500-521 (VSPTWWGFFTAMSAFSNLGLSL). Topologically, residues 522–524 (TAD) are extracellular. The chain crosses the membrane as a helical span at residues 525 to 545 (SMVSFDTAPYPLIFMMFFIII). The Cytoplasmic segment spans residues 546-548 (GNT). The chain crosses the membrane as a helical span at residues 549-569 (GFPIMLRFIIWIMFKTSRDLS). Topologically, residues 570–584 (QFKESLGFLLDHPRR) are extracellular. The helical transmembrane segment at 585-605 (CFTLLFPSGPTWWLFTTLVVL) threads the bilayer. The Cytoplasmic portion of the chain corresponds to 606 to 609 (NATD). Residues 610 to 630 (WILFIILDFNSAVVRQVAKGY) form a helical membrane-spanning segment. At 631–657 (RALMGLFQSVCTRTAGFNVVDLSKLHP) the chain is on the extracellular side. A helical transmembrane segment spans residues 658-678 (SIQVSYMLMMYVSVLPLAISI). Residues 679-743 (RRTNVYEEQS…KSFVGAHLRR (65 aa)) are Cytoplasmic-facing. The segment at 705-733 (DDIKETDHDGESEERDTVSTKSKPKKQSP) is disordered. The chain crosses the membrane as a helical span at residues 744 to 764 (QLSFDLWYLFLGLFIICICEG). Residues 765-776 (RKIEDVNKPDFN) are Extracellular-facing. The helical transmembrane segment at 777-797 (VFAILFEVVSAYGTVGLSLGY) threads the bilayer. The Cytoplasmic segment spans residues 798–889 (PNTNTSLSAQ…KIATKFWGKH (92 aa)).

The protein belongs to the TrkH potassium transport family.

Its subcellular location is the membrane. Functionally, this protein is required for low-affinity potassium transport. In Saccharomyces cerevisiae (strain ATCC 204508 / S288c) (Baker's yeast), this protein is Low-affinity potassium transport protein (TRK2).